The primary structure comprises 1029 residues: Protein translocase subunit SecA (1029 aa).

ATP-binding positions include Gln-143, Gly-161–Thr-165, and Asp-661. Residues Glu-953 to Lys-1029 form a disordered region. 2 stretches are compositionally biased toward basic and acidic residues: residues Leu-966–Thr-975 and Pro-984–Lys-996. Residues Cys-1015, Cys-1017, Cys-1026, and Cys-1027 each coordinate Zn(2+).

This sequence belongs to the SecA family. As to quaternary structure, monomer and homodimer. Part of the essential Sec protein translocation apparatus which comprises SecA, SecYEG and auxiliary proteins SecDF. Other proteins may also be involved. Zn(2+) is required as a cofactor.

The protein resides in the cell inner membrane. The protein localises to the cytoplasm. It carries out the reaction ATP + H2O + cellular proteinSide 1 = ADP + phosphate + cellular proteinSide 2.. Its function is as follows. Part of the Sec protein translocase complex. Interacts with the SecYEG preprotein conducting channel. Has a central role in coupling the hydrolysis of ATP to the transfer of proteins into and across the cell membrane, serving as an ATP-driven molecular motor driving the stepwise translocation of polypeptide chains across the membrane. In Chlorobium phaeobacteroides (strain BS1), this protein is Protein translocase subunit SecA.